The primary structure comprises 306 residues: Arginase (306 aa).

The Mn(2+) site is built by H96, D123, H125, and D127. Residues 125–129 (HTDFH), 136–138 (SGN), and D178 contribute to the substrate site. Mn(2+)-binding residues include D226 and D228. Residues T240 and E271 each coordinate substrate.

Belongs to the arginase family. Requires Mn(2+) as cofactor.

The catalysed reaction is L-arginine + H2O = urea + L-ornithine. Its pathway is nitrogen metabolism; urea cycle; L-ornithine and urea from L-arginine: step 1/1. This is Arginase (arcB) from Brucella abortus biovar 1 (strain 9-941).